The sequence spans 900 residues: Aldos-2-ulose dehydratase (900 aa).

The segment at 1–433 (MYSKVFLKPH…NPSINVFLST (433 aa)) is dehydratase domain. Y35 serves as a coordination point for ascopyrone M. Positions 101, 103, 105, 107, and 109 each coordinate Mg(2+). Residues Y116, M120, H155, H215, H295, and H337 each coordinate ascopyrone M. H155 (proton acceptor) is an active-site residue. Zn(2+) is bound by residues H215, H295, H337, D343, D345, D347, E349, and E351. Ascopyrone M contacts are provided by Y414, Y419, and A627. The interval 434–739 (GILAERLDEE…EFPGFETFST (306 aa)) is isomerase domain. Positions 627 and 630 each coordinate 1,5-anhydro-D-fructose. The Zn(2+) site is built by H630, H632, and E639. E639 and H641 together coordinate ascopyrone M. H641 serves as a coordination point for 1,5-anhydro-D-fructose. H709 is a Zn(2+) binding site. Residue W726 coordinates ascopyrone M. W726 is a binding site for 1,5-anhydro-D-fructose.

In terms of assembly, homodimer. The cofactor is Zn(2+).

The catalysed reaction is 1,5-anhydro-D-fructose = microthecin + H2O. The enzyme catalyses 1,5-anhydro-D-fructose = ascopyrone M + H2O. It catalyses the reaction ascopyrone M = microthecin. It carries out the reaction 2-dehydro-D-glucose = cortalcerone + H2O. Its pathway is carbohydrate metabolism; 1,5-anhydro-D-fructose degradation. Its function is as follows. A bifunctional enzyme which catalyzes the dehydration of anhydrofructose into ascopyrone M, and the isomerization of ascopyrone M into microthecin. To a lesser extent, can also act on 2-dehydro-D-glucopyranose (D-glucosone), leading to the antibiotic cortalcerone. In Phanerodontia chrysosporium (White-rot fungus), this protein is Aldos-2-ulose dehydratase.